The chain runs to 274 residues: NH(3)-dependent NAD(+) synthetase (274 aa).

Residue 46 to 53 (GISGGQDS) participates in ATP binding. Residue D52 participates in Mg(2+) binding. R140 provides a ligand contact to deamido-NAD(+). T160 lines the ATP pocket. Position 165 (E165) interacts with Mg(2+). Deamido-NAD(+) is bound by residues K173 and D180. Residues K189 and T211 each coordinate ATP. Deamido-NAD(+) is bound at residue 260 to 261 (HK).

This sequence belongs to the NAD synthetase family. Homodimer.

The enzyme catalyses deamido-NAD(+) + NH4(+) + ATP = AMP + diphosphate + NAD(+) + H(+). It functions in the pathway cofactor biosynthesis; NAD(+) biosynthesis; NAD(+) from deamido-NAD(+) (ammonia route): step 1/1. In terms of biological role, catalyzes the ATP-dependent amidation of deamido-NAD to form NAD. Uses ammonia as a nitrogen source. In Streptococcus sanguinis (strain SK36), this protein is NH(3)-dependent NAD(+) synthetase.